We begin with the raw amino-acid sequence, 895 residues long: Catenin alpha-3 (895 aa).

A Phosphoserine modification is found at Ser56. Positions 74 to 111 form a coiled coil; sequence EKIAQEATVLKDELTASLEEVRKESEALKVSAERFTDD. Phosphoserine is present on Ser160. The stretch at 325-379 forms a coiled coil; it reads RERIIAECNAIRQALQDLLSEYMNNAGKKERSNTLNIALDNMCKKTRDLRRQLRK. Phosphoserine is present on residues Ser637 and Ser647. Thr649 is subject to Phosphothreonine.

This sequence belongs to the vinculin/alpha-catenin family. In terms of assembly, interacts with CTNNB1. Interacts with PKP2. As to expression, predominantly expressed in heart and testis. Expressed at lower levels in brain, kidney, liver and skeletal muscle.

Its subcellular location is the cytoplasm. It is found in the cytoskeleton. It localises to the cell junction. The protein localises to the desmosome. Functionally, may be involved in formation of stretch-resistant cell-cell adhesion complexes. This chain is Catenin alpha-3, found in Homo sapiens (Human).